The chain runs to 1578 residues: BRD4-interacting chromatin-remodeling complex-associated protein (1578 aa).

Disordered stretches follow at residues 80 to 101 (DILG…DQPC), 631 to 673 (PAVT…PSLA), and 725 to 951 (IVSA…PPPR). Residues 86-96 (AAGGGGGGGGA) are compositionally biased toward gly residues. 2 stretches are compositionally biased toward low complexity: residues 631–662 (PAVT…TQPQ) and 764–782 (IPAA…PSLP). 3 stretches are compositionally biased toward pro residues: residues 793–816 (MPSP…PPSQ), 824–841 (PSEP…PPTL), and 865–888 (PGPP…PASH). A compositionally biased stretch (low complexity) spans 889 to 906 (LPPASTPSAVASSSEPSA). Residue Ser929 is modified to Phosphoserine. Residue Thr931 is modified to Phosphothreonine. Residues 942–951 (PTAPPPPPPR) are compositionally biased toward pro residues. Lys1067 is subject to N6-acetyllysine. The interval 1206–1316 (EKPDEYVSSS…NRPPIKTYEA (111 aa)) is disordered. Composition is skewed to low complexity over residues 1233–1247 (SHGQ…GTSA) and 1275–1294 (ASSS…AASS). Residue Lys1327 forms a Glycyl lysine isopeptide (Lys-Gly) (interchain with G-Cter in SUMO2) linkage. Disordered regions lie at residues 1342 to 1435 (DPVH…PTKV) and 1457 to 1578 (VLKG…TLNR). The span at 1346–1370 (QPLPAPTPAKGAEPPPHPAPPPLPP) shows a compositional bias: pro residues. Ser1427 carries the post-translational modification Phosphoserine. Residues 1502-1532 (ASFSSDSPQDDTLTEHLQSAIDSILNLQQAP) show a composition bias toward polar residues. A compositionally biased stretch (pro residues) spans 1538–1553 (GPYPHTGPTPGTPTSP).

As to quaternary structure, component of the multiprotein chromatin-remodeling complexes SWI/SNF: SWI/SNF-A (BAF), SWI/SNF-B (PBAF) and related complexes. The canonical complex contains a catalytic subunit (either SMARCA4/BRG1/BAF190A or SMARCA2/BRM/BAF190B) and at least SMARCE1, ACTL6A/BAF53, SMARCC1/BAF155, SMARCC2/BAF170, and SMARCB1/SNF5/BAF47. Other subunits specific to each of the complexes may also be present permitting several possible combinations developmentally and tissue specific. Component of the SWI/SNF (GBAF) subcomplex, which includes at least BICRA or BICRAL (mutually exclusive), BRD9, SS18, the core BAF subunits, SMARCA2/BRM, SMARCA4/BRG1/BAF190A, ACTL6A/BAF53, SMARCC1/BAF155, and SMARCD1/BAF60A. Interacts with BRD4; the interaction bridges BRD4 to the GBAF complex.

The protein resides in the nucleus. Functionally, component of SWI/SNF chromatin remodeling subcomplex GBAF that carries out key enzymatic activities, changing chromatin structure by altering DNA-histone contacts within a nucleosome in an ATP-dependent manner. May play a role in BRD4-mediated gene transcription. This Mus musculus (Mouse) protein is BRD4-interacting chromatin-remodeling complex-associated protein.